A 171-amino-acid polypeptide reads, in one-letter code: Tubulin polymerization-promoting protein family member 2 (171 aa).

The disordered stretch occupies residues 120–171 (LTDTSKYTGTHKERFDESGKGKGIAGREDVTDNSGYVSGYKGAGTYDKKGSN). Basic and acidic residues predominate over residues 129–149 (THKERFDESGKGKGIAGREDV).

It belongs to the TPPP family.

The protein localises to the cytoplasm. It localises to the cytosol. The protein resides in the cell projection. Its subcellular location is the cilium. It is found in the flagellum. Its function is as follows. Probable regulator of microtubule dynamics required for sperm motility. In contrast to other members of the family, has no microtubule bundling activity. In Bos taurus (Bovine), this protein is Tubulin polymerization-promoting protein family member 2.